The primary structure comprises 331 residues: MSTKEKLISHVMKEEPVGSRNKVTVVGVGMVGMASAISILLKDLCDELAMVDVMEDKLKGEVMDLQHGSLFLKTKIVGDKDYSVTANSKVVVVTAGARQQEGESRLNLVQRNVNIFKFIIPNIVKYSPNCILMVVSNPVDILTYVAWKLSGFPRNRVIGSGTNLDSARFRHLIGEKLHLHPSSCHAWIVGEHGDSSVPVWSGVNVAGVSLQGLNPQMGTEGDGENWKAIHKEVVDGAYEVIKLKGYTSWAIGMSVADLVESIIKNMHKVHPVSTLVQGMHGVKDEVFLSVPSVLGNSGLTDVIHMTLKAEEEKQLQKSAETLWGVQKELTL.

NAD(+) contacts are provided by residues 29–57 (GMVGMASAISILLKDLCDELAMVDVMEDK) and R98. Residues R105, N137, and R168 each contribute to the substrate site. N137 provides a ligand contact to NAD(+). Residue H192 is the Proton acceptor of the active site. T247 contacts substrate.

Belongs to the LDH/MDH superfamily. LDH family. Homotetramer.

The protein resides in the cytoplasm. The enzyme catalyses (S)-lactate + NAD(+) = pyruvate + NADH + H(+). Its pathway is fermentation; pyruvate fermentation to lactate; (S)-lactate from pyruvate: step 1/1. In terms of biological role, interconverts simultaneously and stereospecifically pyruvate and lactate with concomitant interconversion of NADH and NAD(+). The protein is L-lactate dehydrogenase A chain (ldha) of Dissostichus eleginoides (Patagonian toothfish).